We begin with the raw amino-acid sequence, 601 residues long: Elongation factor 4 (601 aa).

Positions 5–187 constitute a tr-type G domain; it reads DKIRNFSIIA…SIVKDLPAPQ (183 aa). GTP is bound by residues 17–22 and 134–137; these read DHGKST and NKVD.

Belongs to the TRAFAC class translation factor GTPase superfamily. Classic translation factor GTPase family. LepA subfamily.

The protein resides in the cell inner membrane. It catalyses the reaction GTP + H2O = GDP + phosphate + H(+). Required for accurate and efficient protein synthesis under certain stress conditions. May act as a fidelity factor of the translation reaction, by catalyzing a one-codon backward translocation of tRNAs on improperly translocated ribosomes. Back-translocation proceeds from a post-translocation (POST) complex to a pre-translocation (PRE) complex, thus giving elongation factor G a second chance to translocate the tRNAs correctly. Binds to ribosomes in a GTP-dependent manner. This chain is Elongation factor 4, found in Maridesulfovibrio salexigens (strain ATCC 14822 / DSM 2638 / NCIMB 8403 / VKM B-1763) (Desulfovibrio salexigens).